The sequence spans 391 residues: Dual-specificity RNA methyltransferase RlmN (391 aa).

The active-site Proton acceptor is glutamate 112. One can recognise a Radical SAM core domain in the interval 118–368 (ESDRGTLCIS…VRTPRGRDIL (251 aa)). Residues cysteine 125 and cysteine 371 are joined by a disulfide bond. [4Fe-4S] cluster-binding residues include cysteine 132, cysteine 136, and cysteine 139. Residues 197–198 (GE), serine 229, 251–253 (SLH), and asparagine 328 each bind S-adenosyl-L-methionine. The active-site S-methylcysteine intermediate is the cysteine 371.

This sequence belongs to the radical SAM superfamily. RlmN family. [4Fe-4S] cluster serves as cofactor.

It is found in the cytoplasm. It carries out the reaction adenosine(2503) in 23S rRNA + 2 reduced [2Fe-2S]-[ferredoxin] + 2 S-adenosyl-L-methionine = 2-methyladenosine(2503) in 23S rRNA + 5'-deoxyadenosine + L-methionine + 2 oxidized [2Fe-2S]-[ferredoxin] + S-adenosyl-L-homocysteine. The enzyme catalyses adenosine(37) in tRNA + 2 reduced [2Fe-2S]-[ferredoxin] + 2 S-adenosyl-L-methionine = 2-methyladenosine(37) in tRNA + 5'-deoxyadenosine + L-methionine + 2 oxidized [2Fe-2S]-[ferredoxin] + S-adenosyl-L-homocysteine. Specifically methylates position 2 of adenine 2503 in 23S rRNA and position 2 of adenine 37 in tRNAs. m2A2503 modification seems to play a crucial role in the proofreading step occurring at the peptidyl transferase center and thus would serve to optimize ribosomal fidelity. In Beijerinckia indica subsp. indica (strain ATCC 9039 / DSM 1715 / NCIMB 8712), this protein is Dual-specificity RNA methyltransferase RlmN.